The following is a 999-amino-acid chain: Sarcoplasmic/endoplasmic reticulum calcium ATPase 3 (999 aa).

Topologically, residues 1 to 48 are cytoplasmic; sequence MEAAHSVPVQDVLSRFGVAESCGLSPEQVRRNREKYGPNELPAEERKS. A helical membrane pass occupies residues 49–69; the sequence is LWELVLEQFEDLLVRILLMAA. Residues 70 to 89 are Lumenal-facing; the sequence is FLSFILAWFEEGEESTTAFV. Residues 90–110 traverse the membrane as a helical segment; it reads EPIVIIMILIANAVVGVWQER. At 111–253 the chain is on the cytoplasmic side; sequence NAESAIEALK…PEKTPLQQKL (143 aa). The helical transmembrane segment at 254-273 threads the bilayer; it reads DEFSQQLSKVIFLVCIAVWV. Topologically, residues 274-295 are lumenal; it reads INISHFSDPVHGGSWFRGAIYY. The helical transmembrane segment at 296-313 threads the bilayer; it reads FKTSVALAVAAIPEGLPA. Ca(2+)-binding residues include valine 304, alanine 305, isoleucine 307, and glutamate 309. The Cytoplasmic segment spans residues 314 to 757; that stretch reads VITTCLALGT…EEGRAIYNNM (444 aa). Aspartate 351 serves as the catalytic 4-aspartylphosphate intermediate. 2 residues coordinate Mg(2+): aspartate 351 and threonine 353. Threonine 353 provides a ligand contact to ATP. Residues 370–400 are interaction with phospholamban 1; that stretch reads EKVEGTQCSLHEFSITGSTYAPEGQILKDEK. 9 residues coordinate ATP: glutamate 442, arginine 489, lysine 515, arginine 560, threonine 625, glycine 626, aspartate 627, arginine 678, and lysine 684. Aspartate 703 serves as a coordination point for Mg(2+). Asparagine 706 contacts ATP. A helical transmembrane segment spans residues 758-777; the sequence is KQFIRYLISSNVGEVVCIFL. Asparagine 768 and glutamate 771 together coordinate Ca(2+). Topologically, residues 778–787 are lumenal; sequence TAILGLPEAL. The chain crosses the membrane as a helical span at residues 788–808; it reads IPVQLLWVNLVTDGLPATALG. The interaction with phospholamban 2 stretch occupies residues 788–808; sequence IPVQLLWVNLVTDGLPATALG. Positions 796, 799, and 800 each coordinate Ca(2+). The Cytoplasmic portion of the chain corresponds to 809 to 828; it reads FNPPDLDIMDKLPRNPKEPL. Residues 829-851 form a helical membrane-spanning segment; that stretch reads ISGWLFFRYLAIGVYVGLATVGA. Over 852 to 897 the chain is Lumenal; the sequence is ATWWFLYDAEGPQVSFHQLRNFMRCTEDNPIFEGVNCEIFESRYPT. A helical transmembrane segment spans residues 898–917; sequence TMALSVLVTIEMCNALNSVS. Glutamate 908 provides a ligand contact to Ca(2+). Residues 918-930 are Cytoplasmic-facing; that stretch reads ENQSLLRMPPWLN. A helical membrane pass occupies residues 931–949; sequence IWLLGAIVMSMALHFFILY. Residues 950–964 lie on the Lumenal side of the membrane; that stretch reads VKPMPLIFQVTPLSW. A helical transmembrane segment spans residues 965-985; that stretch reads PQWVVVLKISLPVILLDEGLK. Residues 986-999 lie on the Cytoplasmic side of the membrane; the sequence is YLSRNHLEGEEDKK.

It belongs to the cation transport ATPase (P-type) (TC 3.A.3) family. Type IIA subfamily. As to quaternary structure, interacts with sarcolipin (SLN). Interacts with phospholamban (PLN). Interacts with myoregulin (MRLN). Interacts with DWORF. Mg(2+) is required as a cofactor. As to expression, found in spleen, lung, intestine and brain.

Its subcellular location is the endoplasmic reticulum membrane. The protein localises to the sarcoplasmic reticulum membrane. It catalyses the reaction Ca(2+)(in) + ATP + H2O = Ca(2+)(out) + ADP + phosphate + H(+). Its activity is regulated as follows. Inhibited by sarcolipin (SLN), phospholamban (PLN) and myoregulin (MRLN). Enhanced by DWORF; DWORF increases activity by displacing sarcolipin (SLN), phospholamban (PLN) and myoregulin (MRLN). In terms of biological role, this magnesium-dependent enzyme catalyzes the hydrolysis of ATP coupled with the transport of calcium. Transports calcium ions from the cytosol into the sarcoplasmic/endoplasmic reticulum lumen. Contributes to calcium sequestration involved in muscular excitation/contraction. The polypeptide is Sarcoplasmic/endoplasmic reticulum calcium ATPase 3 (ATP2A3) (Gallus gallus (Chicken)).